A 437-amino-acid chain; its full sequence is Nuclear envelope integral membrane protein 1 (437 aa).

The signal sequence occupies residues 1-44 (MAGGIKVSVWSAVGPGPRCWGAGGGGGATWLLLVVAGCVVCGSA). N-linked (GlcNAc...) asparagine glycosylation is present at Asn123. 5 helical membrane-spanning segments follow: residues 159-179 (PKLF…DLLS), 183-203 (IFYY…IVIF), 214-234 (PIYV…QLVF), 244-264 (YWHY…AVCY), and 288-308 (GLMY…VIAL). Residues 184 to 295 (FYYSTGMSVG…GLGLMYSSIQ (112 aa)) are a; required for its colocalization with lamins at the nuclear envelope. The tract at residues 334–403 (PVPPRLLTEE…LTPNEVSVHE (70 aa)) is b; required for interaction with RAN-GTP. The tract at residues 334 to 437 (PVPPRLLTEE…PTFTQNNFLT (104 aa)) is required for nuclear localization. Phosphoserine is present on residues Ser366, Ser419, and Ser420. Over residues 415 to 425 (DEELSSEEEGS) the composition is skewed to acidic residues. Positions 415–437 (DEELSSEEEGSEYPTFTQNNFLT) are disordered. The span at 428–437 (PTFTQNNFLT) shows a compositional bias: polar residues.

Belongs to the NEMP family. In terms of assembly, homooligomer. Interacts with RAN-GTP. Interacts with EMD. Phosphorylated. Phosphorylation may regulate its interaction with RAN-GTP. In terms of tissue distribution, in the ovary, expression is strongest in primordial follicle oocytes and rapidly declines as oocytes mature and move from the cortex (at protein level).

It is found in the nucleus inner membrane. The protein resides in the nucleus envelope. Its function is as follows. Together with EMD, contributes to nuclear envelope stiffness in germ cells. Required for female fertility. Essential for normal erythropoiesis. Required for efficient nuclear envelope opening and enucleation during the late stages of erythroblast maturation. This chain is Nuclear envelope integral membrane protein 1 (Nemp1), found in Mus musculus (Mouse).